Reading from the N-terminus, the 88-residue chain is Long neurotoxin 31 (88 aa).

An N-terminal signal peptide occupies residues 1-21 (MKTLLLTLVVVTIVCLDLGNS). 5 disulfides stabilise this stretch: Cys-24–Cys-42, Cys-35–Cys-63, Cys-48–Cys-52, Cys-67–Cys-78, and Cys-79–Cys-84.

Belongs to the three-finger toxin family. Long-chain subfamily. Type II alpha-neurotoxin sub-subfamily. As to expression, expressed by the venom gland.

The protein resides in the secreted. Functionally, binds with high affinity to muscular (alpha-1/CHRNA1) and neuronal (alpha-7/CHRNA7) nicotinic acetylcholine receptor (nAChR) and inhibits acetylcholine from binding to the receptor, thereby impairing neuromuscular and neuronal transmission. In Drysdalia coronoides (White-lipped snake), this protein is Long neurotoxin 31.